A 280-amino-acid chain; its full sequence is Chemotaxis protein methyltransferase 2 (280 aa).

The 271-residue stretch at 10-280 folds into the CheR-type methyltransferase domain; that stretch reads FGNQEFHYTR…SVGQTVYSPA (271 aa). Residues Asn-85, Thr-87, Arg-91, Glu-125, Asp-150, 208 to 209, and 226 to 227 each bind S-adenosyl-L-methionine; these read NL and RN.

Interacts with the C-terminal pentapeptide GWEEF of the methyl-accepting chemotaxis protein McpB.

The enzyme catalyses L-glutamyl-[protein] + S-adenosyl-L-methionine = [protein]-L-glutamate 5-O-methyl ester + S-adenosyl-L-homocysteine. Functionally, methylation of the methyl-accepting chemotaxis proteins (MCP) to form gamma-glutamyl methyl ester residues in MCP. It specifically targets the McpB chemoreceptor. The sequence is that of Chemotaxis protein methyltransferase 2 from Pseudomonas aeruginosa (strain ATCC 15692 / DSM 22644 / CIP 104116 / JCM 14847 / LMG 12228 / 1C / PRS 101 / PAO1).